The sequence spans 710 residues: PC3-like endoprotease variant B (710 aa).

The first 29 residues, 1–29, serve as a signal peptide directing secretion; sequence MNYRGIYRRRYVFVLLLLVAVVNISYGWT. Asparagine 23, asparagine 62, and asparagine 190 each carry an N-linked (GlcNAc...) asparagine glycan. The propeptide occupies 30–152; it reads VLKNKDYKRR…QQKILERVKR (123 aa). The 323-residue stretch at 164–486 folds into the Peptidase S8 domain; it reads MWYLLNTGQA…FGRLDANAMV (323 aa). Active-site charge relay system residues include aspartate 202 and histidine 242. Cystine bridges form between cysteine 259–cysteine 411 and cysteine 351–cysteine 381. The active-site Charge relay system is the serine 419. One can recognise a P/Homo B domain in the interval 495–638; that stretch reads LPAQRKCTAA…EERVIDTQTK (144 aa). The cysteines at positions 501 and 527 are disulfide-linked. The tract at residues 668-710 is disordered; it reads TIEGSTQDHVKPKEGAKEPWGNYRNTNNINNNSSTAFKRKKKQ. Basic and acidic residues predominate over residues 673 to 684; that stretch reads TQDHVKPKEGAK. A compositionally biased stretch (low complexity) spans 689-699; it reads NYRNTNNINNN. N-linked (GlcNAc...) asparagine glycosylation is found at asparagine 698 and asparagine 699.

Belongs to the peptidase S8 family. Furin subfamily. In terms of tissue distribution, predominantly in the body column.

Probably involved in the processing of hormone and other protein precursors at sites comprised of pairs of basic amino acid residues. This is PC3-like endoprotease variant B from Hydra vulgaris (Hydra).